Reading from the N-terminus, the 127-residue chain is Large ribosomal subunit protein bL12 (127 aa).

The segment at 98-127 (PKPVKNGVSKEEAEEAKKQLVESGAEVEIK) is disordered. The span at 105–117 (VSKEEAEEAKKQL) shows a compositional bias: basic and acidic residues.

The protein belongs to the bacterial ribosomal protein bL12 family. As to quaternary structure, homodimer. Part of the ribosomal stalk of the 50S ribosomal subunit. Forms a multimeric L10(L12)X complex, where L10 forms an elongated spine to which 2 to 4 L12 dimers bind in a sequential fashion. Binds GTP-bound translation factors.

Its function is as follows. Forms part of the ribosomal stalk which helps the ribosome interact with GTP-bound translation factors. Is thus essential for accurate translation. The protein is Large ribosomal subunit protein bL12 of Geobacter sulfurreducens (strain ATCC 51573 / DSM 12127 / PCA).